An 845-amino-acid chain; its full sequence is Probable inorganic carbon transporter subunit DabA (845 aa).

The tract at residues methionine 1–serine 20 is disordered. The Zn(2+) site is built by cysteine 345, aspartate 347, histidine 516, and cysteine 531.

Belongs to the inorganic carbon transporter (TC 9.A.2) DabA family. Forms a complex with DabB. Zn(2+) is required as a cofactor.

The protein resides in the cell inner membrane. In terms of biological role, part of an energy-coupled inorganic carbon pump. This Azotobacter vinelandii (strain DJ / ATCC BAA-1303) protein is Probable inorganic carbon transporter subunit DabA.